The sequence spans 703 residues: Polyribonucleotide nucleotidyltransferase (703 aa).

Mg(2+) contacts are provided by Asp-485 and Asp-491. The KH domain maps to 552–611; the sequence is PRIYTLKIDQDKIRDVIGKGGAMIRSITEASDTNIEIEDDGTIKIFATERAKADIAISKI. An S1 motif domain is found at 621-689; the sequence is GKTYEGKVTR…RQNRVRLSIK (69 aa).

This sequence belongs to the polyribonucleotide nucleotidyltransferase family. Component of the RNA degradosome, which is a multiprotein complex involved in RNA processing and mRNA degradation. The cofactor is Mg(2+).

Its subcellular location is the cytoplasm. The enzyme catalyses RNA(n+1) + phosphate = RNA(n) + a ribonucleoside 5'-diphosphate. Its function is as follows. Involved in mRNA degradation. Catalyzes the phosphorolysis of single-stranded polyribonucleotides processively in the 3'- to 5'-direction. The protein is Polyribonucleotide nucleotidyltransferase of Pseudoalteromonas atlantica (strain T6c / ATCC BAA-1087).